The primary structure comprises 151 residues: MLKEFKEFAMKGNVVDMAVGIIVGGAFGTIVNTLVSQVLMPPLGLLIGGVDFTNLYLILKEGSKAAAPYAALADATAAGAVTVNYGLFLNSVISFLIMAFAVFLLVKAINMLRREEKAPPLAPTTKECPYCLSIVPLKATRCSSCTSELGK.

The next 3 helical transmembrane spans lie at valine 14 to leucine 34, valine 38 to isoleucine 58, and glycine 86 to valine 106.

Belongs to the MscL family. As to quaternary structure, homopentamer.

It is found in the cell inner membrane. Channel that opens in response to stretch forces in the membrane lipid bilayer. May participate in the regulation of osmotic pressure changes within the cell. The sequence is that of Large-conductance mechanosensitive channel from Pelodictyon phaeoclathratiforme (strain DSM 5477 / BU-1).